The chain runs to 344 residues: Transcription factor AIG1 (344 aa).

The bHLH domain occupies 131–180 (AASKSHSEAERRRRERINTHLAKLRSILPNTTKTDKASLLAEVIQHMKEL). The segment at 313-344 (NDESNDNNNLEKSSSGGIKRQRTSKMVNRCYN) is disordered. Residues 318–327 (DNNNLEKSSS) show a composition bias toward low complexity.

Homodimer. Interacts with LHW.

Its subcellular location is the nucleus. In terms of biological role, transcription factor required for MONOPTEROS-dependent root initiation in embryo. Transcriptionally controlled by MONOPTEROS. The chain is Transcription factor AIG1 (BHLH32) from Arabidopsis thaliana (Mouse-ear cress).